The following is a 229-amino-acid chain: ATPase SWSAP1 (229 aa).

Residues 209 to 229 (PWPTQAGDPSSGKGSSSGGQP) form a disordered region.

As to quaternary structure, interacts with ZSWIM7; they form a functional complex involved in homologous recombination repair and stabilize each other. Interacts with RAD51, RAD51B, RAD51C, RAD51D and XRCC3; involved in homologous recombination repair.

The protein localises to the nucleus. ATPase which is preferentially stimulated by single-stranded DNA and is involved in homologous recombination repair (HRR). Has a DNA-binding activity which is independent of its ATPase activity. This chain is ATPase SWSAP1 (SWSAP1), found in Homo sapiens (Human).